The following is a 71-amino-acid chain: Small ribosomal subunit protein bS21 (71 aa).

It belongs to the bacterial ribosomal protein bS21 family.

The chain is Small ribosomal subunit protein bS21 from Shewanella piezotolerans (strain WP3 / JCM 13877).